The following is a 305-amino-acid chain: Ornithine carbamoyltransferase (305 aa).

Carbamoyl phosphate is bound by residues S50–T53, Q77, R101, and H128–Q131. Residues N162, D220, and S224 to M225 contribute to the L-ornithine site. Residues C260–L261 and R288 each bind carbamoyl phosphate.

This sequence belongs to the aspartate/ornithine carbamoyltransferase superfamily. OTCase family.

Its subcellular location is the cytoplasm. The enzyme catalyses carbamoyl phosphate + L-ornithine = L-citrulline + phosphate + H(+). The protein operates within amino-acid degradation; L-arginine degradation via ADI pathway; carbamoyl phosphate from L-arginine: step 2/2. Reversibly catalyzes the transfer of the carbamoyl group from carbamoyl phosphate (CP) to the N(epsilon) atom of ornithine (ORN) to produce L-citrulline. The sequence is that of Ornithine carbamoyltransferase from Akkermansia muciniphila (strain ATCC BAA-835 / DSM 22959 / JCM 33894 / BCRC 81048 / CCUG 64013 / CIP 107961 / Muc).